A 180-amino-acid polypeptide reads, in one-letter code: 3-hydroxyanthranilate 3,4-dioxygenase (180 aa).

Arginine 46 contacts O2. Fe cation is bound by residues histidine 50, glutamate 56, and histidine 94. Glutamate 56 contributes to the substrate binding site. 2 residues coordinate substrate: arginine 98 and glutamate 109. 4 residues coordinate Fe cation: cysteine 124, cysteine 127, cysteine 161, and cysteine 164.

The protein belongs to the 3-HAO family. Homodimer. Fe(2+) serves as cofactor.

The catalysed reaction is 3-hydroxyanthranilate + O2 = (2Z,4Z)-2-amino-3-carboxymuconate 6-semialdehyde. It participates in cofactor biosynthesis; NAD(+) biosynthesis; quinolinate from L-kynurenine: step 3/3. In terms of biological role, catalyzes the oxidative ring opening of 3-hydroxyanthranilate to 2-amino-3-carboxymuconate semialdehyde, which spontaneously cyclizes to quinolinate. The polypeptide is 3-hydroxyanthranilate 3,4-dioxygenase (Jannaschia sp. (strain CCS1)).